Consider the following 422-residue polypeptide: Synaptotagmin-15 (422 aa).

Over M1–Q4 the chain is Extracellular. The chain crosses the membrane as a helical; Signal-anchor for type III membrane protein span at residues L5–W27. The Cytoplasmic portion of the chain corresponds to K28–P422. 2 consecutive C2 domains span residues C148–R267 and E279–N400.

It belongs to the synaptotagmin family. In terms of assembly, homodimer.

The protein localises to the membrane. Functionally, may be involved in the trafficking and exocytosis of secretory vesicles in non-neuronal tissues. The polypeptide is Synaptotagmin-15 (Syt15) (Rattus norvegicus (Rat)).